The sequence spans 193 residues: MTDYLLLFVGTVLVNNFVLVKFLGLCPFMGVSKKLETAMGMGLATTFVMTLASICAWLIDTWILIPLNLIYLRTLAFILVIAVVVQFTEMVVRKTSPVLYRLLGIFLPLITTNCAVLGVALLNINLGHNFLQSALYGFSAAVGFSLVMVLFAAIRERLAVADVPAPFRGNAIALITAGLMSLAFMGFNGLVKL.

6 helical membrane-spanning segments follow: residues 5–25 (LLLF…FLGL), 39–59 (MGMG…AWLI), 63–83 (ILIP…VIAV), 102–122 (LLGI…VALL), 134–154 (ALYG…FAAI), and 171–191 (AIAL…NGLV).

It belongs to the NqrDE/RnfAE family. The complex is composed of six subunits: RsxA, RsxB, RsxC, RsxD, RsxE and RsxG.

Its subcellular location is the cell inner membrane. Its function is as follows. Part of a membrane-bound complex that couples electron transfer with translocation of ions across the membrane. Required to maintain the reduced state of SoxR. The polypeptide is Ion-translocating oxidoreductase complex subunit A (Shigella sonnei (strain Ss046)).